The sequence spans 386 residues: 2-isopropylmalate synthase (386 aa).

One can recognise a Pyruvate carboxyltransferase domain in the interval 15–269 (IRIFDTTLRD…ETNVKTWKLY (255 aa)). Residues Asp24, His207, His209, and Asn243 each coordinate a divalent metal cation.

Belongs to the alpha-IPM synthase/homocitrate synthase family. In terms of assembly, homodimer. Requires a divalent metal cation as cofactor.

It carries out the reaction 3-methyl-2-oxobutanoate + acetyl-CoA + H2O = (2S)-2-isopropylmalate + CoA + H(+). The protein operates within amino-acid biosynthesis; L-leucine biosynthesis; L-leucine from 3-methyl-2-oxobutanoate: step 1/4. In terms of biological role, catalyzes the condensation of the acetyl group of acetyl-CoA with 3-methyl-2-oxobutanoate (2-oxoisovalerate) to form 3-carboxy-3-hydroxy-4-methylpentanoate (2-isopropylmalate). Carries out the first step of the leucine biosynthesis pathway. The chain is 2-isopropylmalate synthase (leuA) from Saccharolobus solfataricus (strain ATCC 35092 / DSM 1617 / JCM 11322 / P2) (Sulfolobus solfataricus).